The chain runs to 352 residues: Quinolinate synthase (352 aa).

H48 and S69 together coordinate iminosuccinate. C114 is a binding site for [4Fe-4S] cluster. Residues 140–142 and S157 contribute to the iminosuccinate site; that span reads YAN. [4Fe-4S] cluster is bound at residue C201. Iminosuccinate-binding positions include 227–229 and T244; that span reads HPE. C298 serves as a coordination point for [4Fe-4S] cluster.

Belongs to the quinolinate synthase family. Type 1 subfamily. It depends on [4Fe-4S] cluster as a cofactor.

Its subcellular location is the cytoplasm. It carries out the reaction iminosuccinate + dihydroxyacetone phosphate = quinolinate + phosphate + 2 H2O + H(+). It participates in cofactor biosynthesis; NAD(+) biosynthesis; quinolinate from iminoaspartate: step 1/1. Catalyzes the condensation of iminoaspartate with dihydroxyacetone phosphate to form quinolinate. In Ectopseudomonas mendocina (strain ymp) (Pseudomonas mendocina), this protein is Quinolinate synthase.